We begin with the raw amino-acid sequence, 415 residues long: Mitochondrial distribution and morphology protein 12 (415 aa).

Positions 1-402 constitute an SMP-LTD domain; sequence MSFDINWSEL…WPSWVCFDLN (402 aa). Residues 53-146 form a disordered region; sequence EITIRHIGDP…PPLTDLRRSR (94 aa). Acidic residues-rich tracts occupy residues 62–75 and 92–103; these read PFDDFYEDEGDDDE and NSSDDDEDDEYD.

This sequence belongs to the MDM12 family. In terms of assembly, component of the ER-mitochondria encounter structure (ERMES) or MDM complex, composed of MMM1, MDM10, MDM12 and MDM34. An MMM1 homodimer associates with one molecule of MDM12 on each side in a pairwise head-to-tail manner, and the SMP-LTD domains of MMM1 and MDM12 generate a continuous hydrophobic tunnel for phospholipid trafficking.

It localises to the mitochondrion outer membrane. It is found in the endoplasmic reticulum membrane. Functionally, component of the ERMES/MDM complex, which serves as a molecular tether to connect the endoplasmic reticulum (ER) and mitochondria. Components of this complex are involved in the control of mitochondrial shape and protein biogenesis, and function in nonvesicular lipid trafficking between the ER and mitochondria. MDM12 is required for the interaction of the ER-resident membrane protein MMM1 and the outer mitochondrial membrane-resident beta-barrel protein MDM10. The MDM12-MMM1 subcomplex functions in the major beta-barrel assembly pathway that is responsible for biogenesis of all mitochondrial outer membrane beta-barrel proteins, and acts in a late step after the SAM complex. The MDM10-MDM12-MMM1 subcomplex further acts in the TOM40-specific pathway after the action of the MDM12-MMM1 complex. Essential for establishing and maintaining the structure of mitochondria and maintenance of mtDNA nucleoids. The sequence is that of Mitochondrial distribution and morphology protein 12 from Debaryomyces hansenii (strain ATCC 36239 / CBS 767 / BCRC 21394 / JCM 1990 / NBRC 0083 / IGC 2968) (Yeast).